The chain runs to 351 residues: Dihydroorotate dehydrogenase (quinone) (351 aa).

Residues 61-65 (AGLDK) and Thr85 each bind FMN. Lys65 contacts substrate. 110-114 (NRMGF) serves as a coordination point for substrate. Positions 139 and 172 each coordinate FMN. Asn172 contacts substrate. Ser175 serves as the catalytic Nucleophile. Asn177 contacts substrate. FMN contacts are provided by Lys217 and Thr245. Position 246-247 (246-247 (NT)) interacts with substrate. FMN is bound by residues Gly268, Gly297, and 318-319 (YS).

It belongs to the dihydroorotate dehydrogenase family. Type 2 subfamily. In terms of assembly, monomer. It depends on FMN as a cofactor.

The protein resides in the cell membrane. The enzyme catalyses (S)-dihydroorotate + a quinone = orotate + a quinol. The protein operates within pyrimidine metabolism; UMP biosynthesis via de novo pathway; orotate from (S)-dihydroorotate (quinone route): step 1/1. Its function is as follows. Catalyzes the conversion of dihydroorotate to orotate with quinone as electron acceptor. The polypeptide is Dihydroorotate dehydrogenase (quinone) (Stenotrophomonas maltophilia (strain K279a)).